Reading from the N-terminus, the 861-residue chain is Semaphorin-4D (861 aa).

Positions 1-23 (MRMCAPVRGLFLALVVVLRTAVA) are cleaved as a signal peptide. One can recognise a Sema domain in the interval 24–500 (FAPVPRLTWE…SNSGVVQAPL (477 aa)). Residues 24-733 (FAPVPRLTWE…TVYLKSSDNR (710 aa)) are Extracellular-facing. N-linked (GlcNAc...) asparagine glycosylation is found at Asn-49 and Asn-77. Intrachain disulfides connect Cys-97–Cys-108 and Cys-126–Cys-135. N-linked (GlcNAc...) asparagine glycans are attached at residues Asn-139 and Asn-191. 2 disulfide bridges follow: Cys-257–Cys-370 and Cys-281–Cys-326. Asn-379 and Asn-419 each carry an N-linked (GlcNAc...) asparagine glycan. A PSI domain is found at 502–551 (FCEKHGSCEDCVLARDPYCAWSPAIKACVTLHQEEASSRGWIQDMSGDTS). Cystine bridges form between Cys-503–Cys-520, Cys-509–Cys-553, Cys-512–Cys-529, and Cys-576–Cys-624. The Ig-like C2-type domain occupies 555 to 636 (DKSKESFNQH…EERVRNKTVS (82 aa)). 2 N-linked (GlcNAc...) asparagine glycosylation sites follow: Asn-613 and Asn-632. Residues 649-709 (VPRTPPSPTS…KSSSGTSCEP (61 aa)) form a disordered region. Residues 657–681 (TSEDAQTEGSKITSKMPVASTQGSS) show a composition bias toward polar residues. The chain crosses the membrane as a helical span at residues 734-754 (LLMSLLLFIFVLFLCLFSYNC). The Cytoplasmic portion of the chain corresponds to 755–861 (YKGYLPGQCL…KFADSDADGD (107 aa)). 2 positions are modified to phosphoserine: Ser-782 and Ser-832. Residues 793–839 (VEPGSFSQQNGDHPKPALDTGYETEQDTITSKVPTDREDSQRIDELS) form a disordered region. Positions 826 to 839 (PTDREDSQRIDELS) are enriched in basic and acidic residues.

This sequence belongs to the semaphorin family. As to quaternary structure, homodimer. Interacts with PLXNB1. Interacts with PLXNB2. In terms of tissue distribution, strongly expressed in lymphoid tissues, especially in the thymus, as well as in the nervous tissues. Expressed in neurons and glia in the developing hippocampus.

The protein localises to the cell membrane. Cell surface receptor for PLXNB1 and PLXNB2 that plays an important role in cell-cell signaling. Regulates GABAergic synapse development. Promotes the development of inhibitory synapses in a PLXNB1-dependent manner. Modulates the complexity and arborization of developing neurites in hippocampal neurons by activating PLXNB1 and interaction with PLXNB1 mediates activation of RHOA. Promotes the migration of cerebellar granule cells. Plays a role in the immune system; induces B-cells to aggregate and improves their viability (in vitro). Induces endothelial cell migration through the activation of PTK2B/PYK2, SRC, and the phosphatidylinositol 3-kinase-AKT pathway. This chain is Semaphorin-4D (Sema4d), found in Mus musculus (Mouse).